The chain runs to 98 residues: NADH-ubiquinone oxidoreductase chain 4L (98 aa).

Transmembrane regions (helical) follow at residues 1–21, 29–49, and 61–81; these read MALT…GLLM, SLLC…LTIL, and IILL…LVMV.

The protein belongs to the complex I subunit 4L family. In terms of assembly, core subunit of respiratory chain NADH dehydrogenase (Complex I) which is composed of 45 different subunits.

The protein localises to the mitochondrion inner membrane. It catalyses the reaction a ubiquinone + NADH + 5 H(+)(in) = a ubiquinol + NAD(+) + 4 H(+)(out). Core subunit of the mitochondrial membrane respiratory chain NADH dehydrogenase (Complex I) which catalyzes electron transfer from NADH through the respiratory chain, using ubiquinone as an electron acceptor. Part of the enzyme membrane arm which is embedded in the lipid bilayer and involved in proton translocation. This is NADH-ubiquinone oxidoreductase chain 4L (MT-ND4L) from Pteropus dasymallus (Ryukyu flying fox).